Here is a 296-residue protein sequence, read N- to C-terminus: MVNLDSLSLRSPAKLNLFLHIVGRRTDGYHLLQSVFQLIDWCDTLHLKRISENVVRRINPIPGVAPEHDLVVRAANLLKDFCQFEGGVEINLQKEIPMGAGMGGGSSDAATTLIGLNALWSLNLSKETLCALGLKLGADVPFFIFGKNAFVEGVGEKMREISLETPDFLVIFPNRGIATASIFQDPELTRDHAQITIDGFLTSPLLYQSNDCQAVAMRIYPEVKQALDWITQAVPGSQPRMSGSGSSVFAVLDSKTDIAKLKNFLQNLPKGWVGRVVRGLNKNPAYNLISFLQIDL.

Lys-14 is a catalytic residue. 97 to 107 contacts ATP; the sequence is PMGAGMGGGSS. Asp-139 is an active-site residue.

The protein belongs to the GHMP kinase family. IspE subfamily.

The catalysed reaction is 4-CDP-2-C-methyl-D-erythritol + ATP = 4-CDP-2-C-methyl-D-erythritol 2-phosphate + ADP + H(+). Its pathway is isoprenoid biosynthesis; isopentenyl diphosphate biosynthesis via DXP pathway; isopentenyl diphosphate from 1-deoxy-D-xylulose 5-phosphate: step 3/6. Catalyzes the phosphorylation of the position 2 hydroxy group of 4-diphosphocytidyl-2C-methyl-D-erythritol. The chain is 4-diphosphocytidyl-2-C-methyl-D-erythritol kinase from Polynucleobacter necessarius subsp. necessarius (strain STIR1).